Consider the following 20-residue polypeptide: Protein C activator (20 aa).

Residues 1–20 (VVGGDECNINEHRSLALMYA) form the Peptidase S1 domain.

The protein belongs to the peptidase S1 family. Snake venom subfamily. As to quaternary structure, monomer. Post-translationally, glycosylated. In terms of tissue distribution, expressed by the venom gland.

The protein localises to the secreted. Inhibited by calcium. Functionally, snake venom serine protease that selectively cleaves the heavy chain of protein C (PROC). This activation is thrombomodulin-independent. This chain is Protein C activator, found in Agkistrodon bilineatus (Cantil).